A 329-amino-acid chain; its full sequence is MKAAITTTAKYLPEEIMSNQDLERILDTNDEWITTRTGIKERRILRDPKKATSYMCTEVARQLLEKRGISADEIDLIIVATMSPDMLFPSTACLVQGNIQAKNAWGFDLSAACSGFVYGLYTGAQFIESGNCKKVMVIGADKMSSILDYEDRTTAILFGDGAGGVILEAANEEGYGVLDARLYSDGLNGREHLLMPGGGSLHPASHETVDQHMHFIQQDGKQVFKAAVIAMADVAEEIMQRNNLTAETIDWLVPHQANQRIIHATAERMGITEEKVMMNIARYGNTTAGTVPICLAELDEQGKLHKGSNLVLVSFGAGYTWGGVYVRWQ.

Residues Cys113 and His255 contribute to the active site. The tract at residues 256–260 is ACP-binding; that stretch reads QANQR. The active site involves Asn285.

This sequence belongs to the thiolase-like superfamily. FabH family. In terms of assembly, homodimer.

The protein resides in the cytoplasm. The catalysed reaction is malonyl-[ACP] + acetyl-CoA + H(+) = 3-oxobutanoyl-[ACP] + CO2 + CoA. The protein operates within lipid metabolism; fatty acid biosynthesis. Catalyzes the condensation reaction of fatty acid synthesis by the addition to an acyl acceptor of two carbons from malonyl-ACP. Catalyzes the first condensation reaction which initiates fatty acid synthesis and may therefore play a role in governing the total rate of fatty acid production. Possesses both acetoacetyl-ACP synthase and acetyl transacylase activities. Its substrate specificity determines the biosynthesis of branched-chain and/or straight-chain of fatty acids. In Chlorobaculum tepidum (strain ATCC 49652 / DSM 12025 / NBRC 103806 / TLS) (Chlorobium tepidum), this protein is Beta-ketoacyl-[acyl-carrier-protein] synthase III.